The chain runs to 96 residues: MSRISIEQVKHVADLARLAMTDEEAELFTKQLDAIITFAEQLNELDTENVPPTSHVLDMRNVMREDEPEPGLPREEVLKNAPDQQDGQFRVPAILE.

Residues 64–96 are disordered; it reads REDEPEPGLPREEVLKNAPDQQDGQFRVPAILE.

Belongs to the GatC family. As to quaternary structure, heterotrimer of A, B and C subunits.

The catalysed reaction is L-glutamyl-tRNA(Gln) + L-glutamine + ATP + H2O = L-glutaminyl-tRNA(Gln) + L-glutamate + ADP + phosphate + H(+). It catalyses the reaction L-aspartyl-tRNA(Asn) + L-glutamine + ATP + H2O = L-asparaginyl-tRNA(Asn) + L-glutamate + ADP + phosphate + 2 H(+). Allows the formation of correctly charged Asn-tRNA(Asn) or Gln-tRNA(Gln) through the transamidation of misacylated Asp-tRNA(Asn) or Glu-tRNA(Gln) in organisms which lack either or both of asparaginyl-tRNA or glutaminyl-tRNA synthetases. The reaction takes place in the presence of glutamine and ATP through an activated phospho-Asp-tRNA(Asn) or phospho-Glu-tRNA(Gln). This chain is Aspartyl/glutamyl-tRNA(Asn/Gln) amidotransferase subunit C, found in Geobacillus thermodenitrificans (strain NG80-2).